A 226-amino-acid polypeptide reads, in one-letter code: Large ribosomal subunit protein uL3 (226 aa).

Residues 135–150 are compositionally biased toward polar residues; that stretch reads MSSQRASHGNSRSHNV. Residues 135–158 are disordered; the sequence is MSSQRASHGNSRSHNVPGSIGMAQ. Gln158 carries the N5-methylglutamine modification.

The protein belongs to the universal ribosomal protein uL3 family. In terms of assembly, part of the 50S ribosomal subunit. Forms a cluster with proteins L14 and L19. Methylated by PrmB.

One of the primary rRNA binding proteins, it binds directly near the 3'-end of the 23S rRNA, where it nucleates assembly of the 50S subunit. The sequence is that of Large ribosomal subunit protein uL3 from Variovorax paradoxus (strain S110).